We begin with the raw amino-acid sequence, 220 residues long: Casparian strip membrane protein 4 (220 aa).

Positions 1 to 39 (MDSRREVEESSTAPILESKRTRSNGKGKSIDGDHSPPHA) are disordered. Residues 1-60 (MDSRREVEESSTAPILESKRTRSNGKGKSIDGDHSPPHAATVVTTKATPLQKGGMKKGIA) are Cytoplasmic-facing. Residues 61-81 (ILDFILRLGAIGAALGAAVIM) traverse the membrane as a helical segment. Over 82–108 (GTNEQILPFFTQFLQFHAQWDDFPMFK) the chain is Extracellular. Residues 109–129 (FFVVANGAAAGFLILSLPFSI) form a helical membrane-spanning segment. The Cytoplasmic portion of the chain corresponds to 130-141 (VCIVRPLAAGPR). The helical transmembrane segment at 142 to 162 (FLLVIVDLVLMALVVAAASSA) threads the bilayer. At 163-194 (AAVVYLAHNGSQDANWNAICQQFTDFCQGSSL) the chain is on the extracellular side. N171 carries an N-linked (GlcNAc...) asparagine glycan. A helical transmembrane segment spans residues 195–215 (AVVASFVASVFLACLVVVSSV). The Cytoplasmic segment spans residues 216–220 (ALKRT).

It belongs to the Casparian strip membrane proteins (CASP) family. As to quaternary structure, homodimer and heterodimers.

The protein localises to the cell membrane. Its function is as follows. Regulates membrane-cell wall junctions and localized cell wall deposition. Required for establishment of the Casparian strip membrane domain (CSD) and the subsequent formation of Casparian strips, a cell wall modification of the root endodermis that determines an apoplastic barrier between the intraorganismal apoplasm and the extraorganismal apoplasm and prevents lateral diffusion. The sequence is that of Casparian strip membrane protein 4 from Medicago truncatula (Barrel medic).